The sequence spans 455 residues: 1-deoxy-D-xylulose 5-phosphate reductoisomerase (455 aa).

NADPH contacts are provided by Thr30, Gly31, Ser32, Ile33, Gln63, and Asn159. Residue Lys160 participates in 1-deoxy-D-xylulose 5-phosphate binding. Glu161 is an NADPH binding site. Asp185 provides a ligand contact to Mn(2+). 2 residues coordinate 1-deoxy-D-xylulose 5-phosphate: Ser186 and Glu187. Glu187 contacts Mn(2+). The segment covering 205–214 (YATAKQSIQP) has biased composition (polar residues). Residues 205–233 (YATAKQSIQPESVRATDPPSSTTDSPAKT) are disordered. 1-deoxy-D-xylulose 5-phosphate is bound by residues Ser246 and His269. Gly275 provides a ligand contact to NADPH. Residues Ser282, Asn287, Lys288, and Glu291 each coordinate 1-deoxy-D-xylulose 5-phosphate. Residue Glu291 coordinates Mn(2+).

This sequence belongs to the DXR family. Requires Mg(2+) as cofactor. It depends on Mn(2+) as a cofactor.

The enzyme catalyses 2-C-methyl-D-erythritol 4-phosphate + NADP(+) = 1-deoxy-D-xylulose 5-phosphate + NADPH + H(+). It functions in the pathway isoprenoid biosynthesis; isopentenyl diphosphate biosynthesis via DXP pathway; isopentenyl diphosphate from 1-deoxy-D-xylulose 5-phosphate: step 1/6. Catalyzes the NADPH-dependent rearrangement and reduction of 1-deoxy-D-xylulose-5-phosphate (DXP) to 2-C-methyl-D-erythritol 4-phosphate (MEP). The polypeptide is 1-deoxy-D-xylulose 5-phosphate reductoisomerase (Rhodopirellula baltica (strain DSM 10527 / NCIMB 13988 / SH1)).